Here is a 382-residue protein sequence, read N- to C-terminus: Saccharopine dehydrogenase [NAD(+), L-lysine-forming] (382 aa).

2 residues coordinate L-saccharopine: R20 and K79. The Proton acceptor role is filled by K79. Residue H98 is the Proton donor of the active site. Q103 is an L-saccharopine binding site. Position 132 (R132) interacts with NAD(+). R133 and F137 together coordinate L-saccharopine. NAD(+)-binding positions include 215–216 (GR), D239, T243, Y263, and V290. C217 and C261 are oxidised to a cystine. 291–293 (SAD) lines the L-saccharopine pocket. NAD(+) is bound at residue 330–333 (IDHL).

It belongs to the AlaDH/PNT family. In terms of assembly, monomer.

It carries out the reaction L-saccharopine + NAD(+) + H2O = L-lysine + 2-oxoglutarate + NADH + H(+). It participates in amino-acid biosynthesis; L-lysine biosynthesis via AAA pathway; L-lysine from L-alpha-aminoadipate (fungal route): step 3/3. In terms of biological role, catalyzes the NAD(+)-dependent cleavage of saccharopine to L-lysine and 2-oxoglutarate, the final step in the alpha-aminoadipate (AAA) pathway for lysin biosynthesis. The sequence is that of Saccharopine dehydrogenase [NAD(+), L-lysine-forming] from Candida albicans (strain SC5314 / ATCC MYA-2876) (Yeast).